The sequence spans 33 residues: Photosystem II reaction center protein Psb30 (33 aa).

Residues 8–28 (QLTALAFIVLSGPLVIALLAF) form a helical membrane-spanning segment.

This sequence belongs to the Psb30/Ycf12 family. In terms of assembly, PSII is composed of 1 copy each of membrane proteins PsbA, PsbB, PsbC, PsbD, PsbE, PsbF, PsbH, PsbI, PsbJ, PsbK, PsbL, PsbM, PsbT, PsbX, PsbY, PsbZ, Psb30/Ycf12, peripheral proteins of the oxygen-evolving complex and a large number of cofactors. It forms dimeric complexes.

The protein resides in the plastid. It is found in the chloroplast thylakoid membrane. Functionally, a core subunit of photosystem II (PSII), probably helps stabilize the reaction center. This is Photosystem II reaction center protein Psb30 from Staurastrum punctulatum (Green alga).